The sequence spans 319 residues: Transcription elongation factor A protein 1 (319 aa).

Positions 1 to 78 (MQEIIKCREQ…DKWKQDIEGT (78 aa)) constitute a TFIIS N-terminal domain. Low complexity predominate over residues 78–106 (TSATTTSSSSSSSSSTTSTTTTKTASPSE). A disordered region spans residues 78-146 (TSATTTSSSS…TTPKTSSPPI (69 aa)). The segment covering 107–122 (SLKRKSISEDTSDRPT) has biased composition (basic and acidic residues). The segment covering 133-146 (ISPPTTPKTSSPPI) has biased composition (low complexity). The TFIIS central domain maps to 160–272 (LRNKTIQLFV…ASMLGQNNEA (113 aa)). The segment at 275-317 (DQFQCGKCKQRKCTYTQLQTRSADEPPTTFVKCCVKGCGNRWR) adopts a TFIIS-type zinc-finger fold. Residues Cys279, Cys282, Cys307, and Cys312 each coordinate Zn(2+).

It belongs to the TFS-II family.

It localises to the nucleus. Its function is as follows. Necessary for efficient RNA polymerase II transcription elongation past template-encoded arresting sites. The arresting sites in DNA have the property of trapping a certain fraction of elongating RNA polymerases that pass through, resulting in locked ternary complexes. Cleavage of the nascent transcript by S-II allows the resumption of elongation from the new 3'-terminus. The sequence is that of Transcription elongation factor A protein 1 (tcea1) from Dictyostelium discoideum (Social amoeba).